The following is a 224-amino-acid chain: NBPF family member NBPF6-like protein (224 aa).

One can recognise an Olduvai domain in the interval 159–224 (ENHHDRKDEE…ASVCDVQDQL (66 aa)). A compositionally biased stretch (basic and acidic residues) spans 198-209 (YLTHSSHHDSHR). The segment at 198 to 224 (YLTHSSHHDSHRPPSSIASVCDVQDQL) is disordered.

Belongs to the NBPF family.

In Bos taurus (Bovine), this protein is NBPF family member NBPF6-like protein.